The following is a 504-amino-acid chain: Ribonuclease Y (504 aa).

The 86-residue stretch at Thr-194–Val-279 folds into the KH domain. The HD domain occupies Val-320 to Ala-413.

The protein belongs to the RNase Y family.

Endoribonuclease that initiates mRNA decay. The chain is Ribonuclease Y from Clostridium novyi (strain NT).